The primary structure comprises 371 residues: DNA replication and repair protein RecF (371 aa).

An ATP-binding site is contributed by Gly-30 to Thr-37.

This sequence belongs to the RecF family.

The protein localises to the cytoplasm. Functionally, the RecF protein is involved in DNA metabolism; it is required for DNA replication and normal SOS inducibility. RecF binds preferentially to single-stranded, linear DNA. It also seems to bind ATP. In Desulforamulus reducens (strain ATCC BAA-1160 / DSM 100696 / MI-1) (Desulfotomaculum reducens), this protein is DNA replication and repair protein RecF.